Consider the following 371-residue polypeptide: Chaperone protein DnaJ (371 aa).

In terms of domain architecture, J spans 6-71 (DYYEILGVEK…QKRAQYDRFG (66 aa)). The disordered stretch occupies residues 104–123 (GGMGGQQRQRRNRNEPRRGS). The segment at 139–217 (GIEKEIEFDT…CKGKGRVAEH (79 aa)) adopts a CR-type zinc-finger fold. Zn(2+)-binding residues include Cys-152, Cys-155, Cys-169, Cys-172, Cys-191, Cys-194, Cys-205, and Cys-208. CXXCXGXG motif repeat units lie at residues 152–159 (CDECKGTG), 169–176 (CGTCGGSG), 191–198 (CPTCHGQG), and 205–212 (CKPCKGKG).

This sequence belongs to the DnaJ family. In terms of assembly, homodimer. Zn(2+) is required as a cofactor.

It localises to the cytoplasm. Functionally, participates actively in the response to hyperosmotic and heat shock by preventing the aggregation of stress-denatured proteins and by disaggregating proteins, also in an autonomous, DnaK-independent fashion. Unfolded proteins bind initially to DnaJ; upon interaction with the DnaJ-bound protein, DnaK hydrolyzes its bound ATP, resulting in the formation of a stable complex. GrpE releases ADP from DnaK; ATP binding to DnaK triggers the release of the substrate protein, thus completing the reaction cycle. Several rounds of ATP-dependent interactions between DnaJ, DnaK and GrpE are required for fully efficient folding. Also involved, together with DnaK and GrpE, in the DNA replication of plasmids through activation of initiation proteins. This chain is Chaperone protein DnaJ, found in Bdellovibrio bacteriovorus (strain ATCC 15356 / DSM 50701 / NCIMB 9529 / HD100).